The following is a 173-amino-acid chain: MIEKREFYSKEDLIASSRGELFGERGPQLPAHQMLMMDQVVKITKYGGHYNKGFMEAELDIKPDMWFFCCHFIGDPVMPGCLGLDAMWQLVGFYLGWIGGKGKGRALGVGEVKFIGQILPSAKKVTYRIHFRRIIHRQLLMGMADGEVICDGKIIYTATDLKVGLFQDPTILS.

Residue His71 is part of the active site.

It belongs to the thioester dehydratase family. FabA subfamily. Homodimer.

It is found in the cytoplasm. The enzyme catalyses a (3R)-hydroxyacyl-[ACP] = a (2E)-enoyl-[ACP] + H2O. It carries out the reaction (3R)-hydroxydecanoyl-[ACP] = (2E)-decenoyl-[ACP] + H2O. It catalyses the reaction (2E)-decenoyl-[ACP] = (3Z)-decenoyl-[ACP]. It participates in lipid metabolism; fatty acid biosynthesis. Necessary for the introduction of cis unsaturation into fatty acids. Catalyzes the dehydration of (3R)-3-hydroxydecanoyl-ACP to E-(2)-decenoyl-ACP and then its isomerization to Z-(3)-decenoyl-ACP. Can catalyze the dehydratase reaction for beta-hydroxyacyl-ACPs with saturated chain lengths up to 16:0, being most active on intermediate chain length. This Baumannia cicadellinicola subsp. Homalodisca coagulata protein is 3-hydroxydecanoyl-[acyl-carrier-protein] dehydratase.